Reading from the N-terminus, the 294-residue chain is UPF0282 protein APE_0500.1 (294 aa).

It belongs to the UPF0282 family.

This Aeropyrum pernix (strain ATCC 700893 / DSM 11879 / JCM 9820 / NBRC 100138 / K1) protein is UPF0282 protein APE_0500.1.